Consider the following 201-residue polypeptide: 3-isopropylmalate dehydratase small subunit (201 aa).

It belongs to the LeuD family. LeuD type 1 subfamily. In terms of assembly, heterodimer of LeuC and LeuD.

It catalyses the reaction (2R,3S)-3-isopropylmalate = (2S)-2-isopropylmalate. The protein operates within amino-acid biosynthesis; L-leucine biosynthesis; L-leucine from 3-methyl-2-oxobutanoate: step 2/4. Its function is as follows. Catalyzes the isomerization between 2-isopropylmalate and 3-isopropylmalate, via the formation of 2-isopropylmaleate. This Chloroflexus aurantiacus (strain ATCC 29366 / DSM 635 / J-10-fl) protein is 3-isopropylmalate dehydratase small subunit.